Consider the following 395-residue polypeptide: S-adenosylmethionine synthase (395 aa).

Position 18 (histidine 18) interacts with ATP. Mg(2+) is bound at residue aspartate 20. Glutamate 46 is a K(+) binding site. The L-methionine site is built by glutamate 59 and glutamine 103. The tract at residues 103 to 113 is flexible loop; that stretch reads QSADIAVGVDS. ATP is bound by residues 170 to 172, 235 to 236, aspartate 244, 250 to 251, alanine 267, and lysine 271; these read DAK, KF, and RK. Aspartate 244 is an L-methionine binding site. L-methionine is bound at residue lysine 275.

This sequence belongs to the AdoMet synthase family. As to quaternary structure, homotetramer; dimer of dimers. It depends on Mg(2+) as a cofactor. The cofactor is K(+).

It localises to the cytoplasm. It carries out the reaction L-methionine + ATP + H2O = S-adenosyl-L-methionine + phosphate + diphosphate. Its pathway is amino-acid biosynthesis; S-adenosyl-L-methionine biosynthesis; S-adenosyl-L-methionine from L-methionine: step 1/1. Functionally, catalyzes the formation of S-adenosylmethionine (AdoMet) from methionine and ATP. The overall synthetic reaction is composed of two sequential steps, AdoMet formation and the subsequent tripolyphosphate hydrolysis which occurs prior to release of AdoMet from the enzyme. This Granulibacter bethesdensis (strain ATCC BAA-1260 / CGDNIH1) protein is S-adenosylmethionine synthase.